The chain runs to 133 residues: Holo-[acyl-carrier-protein] synthase (133 aa).

2 residues coordinate Mg(2+): Asp8 and Glu57.

It belongs to the P-Pant transferase superfamily. AcpS family. Mg(2+) is required as a cofactor.

The protein resides in the cytoplasm. The enzyme catalyses apo-[ACP] + CoA = holo-[ACP] + adenosine 3',5'-bisphosphate + H(+). Transfers the 4'-phosphopantetheine moiety from coenzyme A to a Ser of acyl-carrier-protein. The protein is Holo-[acyl-carrier-protein] synthase of Caulobacter vibrioides (strain ATCC 19089 / CIP 103742 / CB 15) (Caulobacter crescentus).